The sequence spans 498 residues: Protein translocase subunit SecY (498 aa).

Transmembrane regions (helical) follow at residues 23 to 43, 65 to 87, 124 to 144, 163 to 183, 191 to 211, 229 to 249, 281 to 301, 322 to 342, 382 to 402, and 406 to 426; these read FVIS…ISVI, FDLF…VGIS, ITRF…IALI, AFYI…GDII, GITL…FIVM, AINF…ISFV, AAGV…ITIA, PVGI…YSYI, FIGA…SLVL, and TTLS…MELY. Over residues 478–488 the composition is skewed to basic and acidic residues; sequence VEPTQDKKKNP. The disordered stretch occupies residues 478 to 498; it reads VEPTQDKKKNPSDPLEVSQLW.

Belongs to the SecY/SEC61-alpha family. Component of the Sec protein translocase complex. Heterotrimer consisting of SecY, SecE and SecG subunits. The heterotrimers can form oligomers, although 1 heterotrimer is thought to be able to translocate proteins. Interacts with the ribosome. Interacts with SecDF, and other proteins may be involved. Interacts with SecA.

It is found in the cell membrane. Functionally, the central subunit of the protein translocation channel SecYEG. Consists of two halves formed by TMs 1-5 and 6-10. These two domains form a lateral gate at the front which open onto the bilayer between TMs 2 and 7, and are clamped together by SecE at the back. The channel is closed by both a pore ring composed of hydrophobic SecY resides and a short helix (helix 2A) on the extracellular side of the membrane which forms a plug. The plug probably moves laterally to allow the channel to open. The ring and the pore may move independently. The chain is Protein translocase subunit SecY from Mycoplasmoides gallisepticum (strain R(low / passage 15 / clone 2)) (Mycoplasma gallisepticum).